The sequence spans 306 residues: Oxygen-dependent coproporphyrinogen-III oxidase (306 aa).

Serine 93 lines the substrate pocket. Residues histidine 97 and histidine 107 each contribute to the a divalent metal cation site. Histidine 107 serves as the catalytic Proton donor. 109 to 111 (NVR) serves as a coordination point for substrate. A divalent metal cation contacts are provided by histidine 146 and histidine 176. Residues 241–276 (YVEYNLVYDRGTLFGLQSGGRTESILMSLPPQVAWG) form an important for dimerization region. Substrate is bound at residue 259–261 (GGR).

Belongs to the aerobic coproporphyrinogen-III oxidase family. As to quaternary structure, homodimer. It depends on a divalent metal cation as a cofactor.

The protein resides in the cytoplasm. The enzyme catalyses coproporphyrinogen III + O2 + 2 H(+) = protoporphyrinogen IX + 2 CO2 + 2 H2O. The protein operates within porphyrin-containing compound metabolism; protoporphyrin-IX biosynthesis; protoporphyrinogen-IX from coproporphyrinogen-III (O2 route): step 1/1. Its function is as follows. Involved in the heme biosynthesis. Catalyzes the aerobic oxidative decarboxylation of propionate groups of rings A and B of coproporphyrinogen-III to yield the vinyl groups in protoporphyrinogen-IX. This is Oxygen-dependent coproporphyrinogen-III oxidase from Stutzerimonas stutzeri (strain A1501) (Pseudomonas stutzeri).